The sequence spans 429 residues: Glucose-6-phosphate isomerase (429 aa).

Glu-282 functions as the Proton donor in the catalytic mechanism. Active-site residues include His-303 and Lys-418.

It belongs to the GPI family.

The protein resides in the cytoplasm. It carries out the reaction alpha-D-glucose 6-phosphate = beta-D-fructose 6-phosphate. It functions in the pathway carbohydrate biosynthesis; gluconeogenesis. It participates in carbohydrate degradation; glycolysis; D-glyceraldehyde 3-phosphate and glycerone phosphate from D-glucose: step 2/4. In terms of biological role, catalyzes the reversible isomerization of glucose-6-phosphate to fructose-6-phosphate. The protein is Glucose-6-phosphate isomerase of Mesomycoplasma hyopneumoniae (strain 232) (Mycoplasma hyopneumoniae).